The sequence spans 443 residues: Xaa-Pro dipeptidase (443 aa).

Mn(2+)-binding residues include Asp246, Asp257, His339, Glu384, and Glu423.

It belongs to the peptidase M24B family. Bacterial-type prolidase subfamily. It depends on Mn(2+) as a cofactor.

The enzyme catalyses Xaa-L-Pro dipeptide + H2O = an L-alpha-amino acid + L-proline. Splits dipeptides with a prolyl residue in the C-terminal position. The chain is Xaa-Pro dipeptidase from Shigella flexneri.